Here is a 3065-residue protein sequence, read N- to C-terminus: MAX gene-associated protein (3065 aa).

Glycyl lysine isopeptide (Lys-Gly) (interchain with G-Cter in SUMO2) cross-links involve residues K4 and K178. The T-box DNA-binding region spans 84–260 (MWNEFYHRST…YNPFAKGFRD (177 aa)). Residues 259-277 (RDDGLNNKPQRDGKQKNSS) show a composition bias toward basic and acidic residues. The segment at 259–322 (RDDGLNNKPQ…GHETSGKGLE (64 aa)) is disordered. Residues 278–289 (DQEGNNISSSSG) are compositionally biased toward polar residues. Positions 309–322 (PLSRGHETSGKGLE) are enriched in basic and acidic residues. Glycyl lysine isopeptide (Lys-Gly) (interchain with G-Cter in SUMO2) cross-links involve residues K323, K329, K349, K432, K460, K465, and K482. S534 is modified (phosphoserine). K570 participates in a covalent cross-link: Glycyl lysine isopeptide (Lys-Gly) (interchain with G-Cter in SUMO2). The disordered stretch occupies residues 604-653 (QNASPNVPGKRGRPRKLKLCKAGRPPKNTGKSLISTKNTPVSPGSTFPDV). Position 607 is a phosphoserine (S607). K613 is covalently cross-linked (Glycyl lysine isopeptide (Lys-Gly) (interchain with G-Cter in SUMO2)). A compositionally biased stretch (basic residues) spans 613 to 624 (KRGRPRKLKLCK). The segment covering 632-648 (TGKSLISTKNTPVSPGS) has biased composition (polar residues). Phosphoserine is present on S645. Glycyl lysine isopeptide (Lys-Gly) (interchain with G-Cter in SUMO2) cross-links involve residues K654, K785, K791, K817, and K826. S851 carries the post-translational modification Phosphoserine. Residues 881–911 (STSYSLKPHSVPPVSRKAKSQNRQATFSGRT) form a disordered region. The span at 901–911 (QNRQATFSGRT) shows a compositional bias: polar residues. S924 carries the phosphoserine modification. K928 participates in a covalent cross-link: Glycyl lysine isopeptide (Lys-Gly) (interchain with G-Cter in SUMO2). Residues 971-990 (RQAQQQQQQQQGSRPPGLSK) are disordered. Positions 972–981 (QAQQQQQQQQ) are enriched in low complexity. Glycyl lysine isopeptide (Lys-Gly) (interchain with G-Cter in SUMO2) cross-links involve residues K990, K1091, K1140, K1162, K1199, and K1207. Residues 1111–1147 (YDTLGEEAREEEEGIREEEEQLKEKKKRKKLEYTICE) adopt a coiled-coil conformation. S1208 bears the Phosphoserine mark. Disordered stretches follow at residues 1246–1332 (RKKE…PGGP) and 1380–1429 (RKSR…MEDI). Low complexity-rich tracts occupy residues 1253–1269 (QPSS…QQTS) and 1310–1322 (KSSC…SSTS). 2 positions are modified to phosphoserine: S1430 and S1457. Residues K1461 and K1502 each participate in a glycyl lysine isopeptide (Lys-Gly) (interchain with G-Cter in SUMO2) cross-link. 3 disordered regions span residues 1488–1517 (SRKP…PGKN), 1905–1927 (SPPE…YSSG), and 1967–2029 (QMKR…EDRG). 2 stretches are compositionally biased toward polar residues: residues 1495–1514 (LPST…TNRP) and 1911–1927 (SFAS…YSSG). Residues 1968–1994 (MKRESQNPDQKDETNSIKREQETKKVL) are compositionally biased toward basic and acidic residues. Glycyl lysine isopeptide (Lys-Gly) (interchain with G-Cter in SUMO2) cross-links involve residues K1985 and K1992. Residues 2008–2023 (IKQNSGAATSEETLND) show a composition bias toward polar residues. Residues K2103, K2113, K2135, K2139, K2146, K2159, K2194, K2206, and K2238 each participate in a glycyl lysine isopeptide (Lys-Gly) (interchain with G-Cter in SUMO2) cross-link. Residues 2258-2316 (RRAAKSSRGNGHFQGHLLLPGEQIQPKQEKKGGRSSADFTVLDLEEDDEDDNEKTDDSI) form a disordered region. The residue at position 2265 (R2265) is an Omega-N-methylarginine. A Glycyl lysine isopeptide (Lys-Gly) (interchain with G-Cter in SUMO2) cross-link involves residue K2284. A compositionally biased stretch (acidic residues) spans 2300 to 2316 (DLEEDDEDDNEKTDDSI). Residues K2378, K2413, K2457, and K2532 each participate in a glycyl lysine isopeptide (Lys-Gly) (interchain with G-Cter in SUMO2) cross-link. In terms of domain architecture, bHLH spans 2423–2474 (YYRRTHTANERRRRGEMRDLFEKLKITLGLLHSSKVSKSLILTRAFSEIQGL). Residue S2541 is modified to Phosphoserine. K2546 is covalently cross-linked (Glycyl lysine isopeptide (Lys-Gly) (interchain with G-Cter in SUMO2)). The tract at residues 2576–2595 (KKDQATENTSPLNTPHTSAN) is disordered. The span at 2581–2595 (TENTSPLNTPHTSAN) shows a compositional bias: polar residues. Residues K2629, K2679, K2698, and K2784 each participate in a glycyl lysine isopeptide (Lys-Gly) (interchain with G-Cter in SUMO2) cross-link. The disordered stretch occupies residues 2668 to 2709 (GSKYPHEVPDSKPSDHLKDTVRNEDNSLEDKGRISSRGNRDG). Residues 2671 to 2709 (YPHEVPDSKPSDHLKDTVRNEDNSLEDKGRISSRGNRDG) are compositionally biased toward basic and acidic residues. Positions 2817-2841 (DDTDETLTSLLNEIAFLNQQLNDDS) form a coiled coil. Residues S2910 and S2921 each carry the phosphoserine modification. The tract at residues 2944-2968 (AIDGGKNTSGLPAEPESVSSPPTLH) is disordered. S2978 carries the post-translational modification Phosphoserine. Residue K3041 forms a Glycyl lysine isopeptide (Lys-Gly) (interchain with G-Cter in SUMO2) linkage.

Interacts with MAX. Requires dimerization with MAX for E-box binding. Component of some MLL1/MLL complex, at least composed of the core components KMT2A/MLL1, ASH2L, HCFC1/HCF1, WDR5 and RBBP5, as well as the facultative components BACC1, CHD8, E2F6, HSP70, INO80C, KANSL1, LAS1L, MAX, MCRS1, MGA, MYST1/MOF, PELP1, PHF20, PRP31, RING2, RUVB1/TIP49A, RUVB2/TIP49B, SENP3, TAF1, TAF4, TAF6, TAF7, TAF9 and TEX10. Interacts with ZMYND11. Highly expressed in germ cells and granulosa cells.

It localises to the nucleus. Functions as a dual-specificity transcription factor, regulating the expression of both MAX-network and T-box family target genes. Functions as a repressor or an activator. Binds to 5'-AATTTCACACCTAGGTGTGAAATT-3' core sequence and seems to regulate MYC-MAX target genes. Suppresses transcriptional activation by MYC and inhibits MYC-dependent cell transformation. Function activated by heterodimerization with MAX. This heterodimerization serves the dual function of both generating an E-box-binding heterodimer and simultaneously blocking interaction of a corepressor. The sequence is that of MAX gene-associated protein from Homo sapiens (Human).